The following is a 236-amino-acid chain: ATP synthase subunit a (236 aa).

A run of 5 helical transmembrane segments spans residues 18-38 (STVM…FIST), 79-99 (GITL…FSIV), 112-132 (DPTV…FYGV), 174-194 (IYAG…GAVG), and 205-227 (WQGF…TMVY).

This sequence belongs to the ATPase A chain family. F-type ATPases have 2 components, CF(1) - the catalytic core - and CF(0) - the membrane proton channel. CF(1) has five subunits: alpha(3), beta(3), gamma(1), delta(1), epsilon(1). CF(0) has three main subunits: a(1), b(2) and c(9-12). The alpha and beta chains form an alternating ring which encloses part of the gamma chain. CF(1) is attached to CF(0) by a central stalk formed by the gamma and epsilon chains, while a peripheral stalk is formed by the delta and b chains.

Its subcellular location is the cell membrane. Key component of the proton channel; it plays a direct role in the translocation of protons across the membrane. The sequence is that of ATP synthase subunit a from Lysinibacillus sphaericus (strain C3-41).